Here is a 78-residue protein sequence, read N- to C-terminus: Small ribosomal subunit protein eS21 (78 aa).

It belongs to the eukaryotic ribosomal protein eS21 family.

In Dictyostelium discoideum (Social amoeba), this protein is Small ribosomal subunit protein eS21 (rps21).